A 578-amino-acid chain; its full sequence is MKNNWIIILVLVIVIIAAVLYLIGYFMRKKNQEQLDELEVRKEALFDLPVFEEIDDIKKMHLVGQSQNSFREWNQRWVELSTRSFAELESQIYEVENQNEIFRFMKAKKAVVEANETMTEMEAEVEVIRNGLKELRESEERNSLEVQKALDVYEELSKSLKDDKASFGPAYSEIQKQLRNVEIEFTQFVTLNTSGDPIEAREVLEDAERHTYELEDLMKRIPPMYEELNETFPDQLKEIEEGYNQLLADDYVFPEQNFAEEIQHAKKRVENSMADLEKTEIAAVEVANRDTATAIDALYEVMEREIEAKKYVVTNQKIIDDYISHSLKNNRQLMIELDHVSQSYTLNNNELGRSRGFQTEIEEIIRRQKDLEPRMKEHTVPYSEIQAFYKECYKILDDIENQQLEIDASLKELRKGEKVAQEKVDEYEFRLRSIKRYVEKQRLPGLSADYLEFFYVATDRIEDLSRALNKMRINMDEINRLCDLCEDDLELLDKKTKDLVNAAALTEQMMQYANRYRHTHENIRAALDKSMYLFSTEFRYQDALDEIGTALEAVEPGAFKRIEDFYFKNINNPNLTAI.

Topologically, residues 1–8 are extracellular; that stretch reads MKNNWIII. A helical transmembrane segment spans residues 9–27; the sequence is LVLVIVIIAAVLYLIGYFM. The Cytoplasmic segment spans residues 28–578; sequence RKKNQEQLDE…NINNPNLTAI (551 aa). Coiled coils occupy residues 103–165, 256–285, and 394–490; these read RFMK…DDKA, QNFA…AAVE, and KILD…DDLE.

Belongs to the EzrA family.

It localises to the cell membrane. Negative regulator of FtsZ ring formation; modulates the frequency and position of FtsZ ring formation. Inhibits FtsZ ring formation at polar sites. Interacts either with FtsZ or with one of its binding partners to promote depolymerization. This Enterococcus faecalis (strain ATCC 700802 / V583) protein is Septation ring formation regulator EzrA.